A 425-amino-acid chain; its full sequence is Kynurenine/alpha-aminoadipate aminotransferase, mitochondrial (425 aa).

Residues 1-29 constitute a mitochondrion transit peptide; the sequence is MNYSRFLTATSLARKPSPIRTTADILSKA. Arginine 20 is a binding site for substrate. Serine 40 carries the phosphoserine modification. N6-acetyllysine is present on lysine 69. Tyrosine 74 contributes to the substrate binding site. Position 172 is an N6-succinyllysine (lysine 172). Lysine 179 is modified (N6-acetyllysine). A substrate-binding site is contributed by asparagine 202. Lysine 263 is modified (N6-(pyridoxal phosphate)lysine; alternate). An N6-acetyllysine; alternate mark is found at lysine 263 and lysine 339. Residues lysine 263 and lysine 339 each carry the N6-succinyllysine; alternate modification. Position 351 is an N6-acetyllysine (lysine 351). Lysine 367 bears the N6-acetyllysine; alternate mark. Lysine 367 is modified (N6-succinyllysine; alternate). Residue arginine 399 coordinates substrate. Lysine 422 carries the post-translational modification N6-acetyllysine.

This sequence belongs to the class-I pyridoxal-phosphate-dependent aminotransferase family. In terms of assembly, homodimer. Requires pyridoxal 5'-phosphate as cofactor. As to expression, expressed mainly in kidney and to a lesser amount in liver and brain.

The protein resides in the mitochondrion. The enzyme catalyses L-kynurenine + 2-oxoglutarate = kynurenate + L-glutamate + H2O. It catalyses the reaction L-2-aminoadipate + 2-oxoglutarate = 2-oxoadipate + L-glutamate. It carries out the reaction glycine + 2-oxoglutarate = glyoxylate + L-glutamate. The catalysed reaction is L-kynurenine + glyoxylate = kynurenate + glycine + H2O. The enzyme catalyses 3-hydroxy-L-kynurenine + glyoxylate = xanthurenate + glycine + H2O. It catalyses the reaction 2-oxohexanoate + L-kynurenine = L-2-aminohexanoate + kynurenate + H2O. It carries out the reaction 3-phenylpyruvate + L-kynurenine = kynurenate + L-phenylalanine + H2O. The catalysed reaction is 4-methylsulfanyl-2-oxobutanoate + L-kynurenine = kynurenate + L-methionine + H2O. The enzyme catalyses 2-oxo-3-sulfanylpropanoate + L-kynurenine = kynurenate + L-cysteine + H2O. It catalyses the reaction indole-3-pyruvate + L-kynurenine = kynurenate + L-tryptophan + H2O. It carries out the reaction 2-oxopentanoate + L-kynurenine = L-2-aminopentanoate + kynurenate + H2O. The catalysed reaction is 4-methyl-2-oxopentanoate + L-kynurenine = kynurenate + L-leucine + H2O. The enzyme catalyses glyoxylate + L-methionine = 4-methylsulfanyl-2-oxobutanoate + glycine. It catalyses the reaction L-2-aminoadipate + glyoxylate = 2-oxoadipate + glycine. It carries out the reaction L-tyrosine + glyoxylate = 3-(4-hydroxyphenyl)pyruvate + glycine. The catalysed reaction is glyoxylate + L-phenylalanine = 3-phenylpyruvate + glycine. The enzyme catalyses L-tryptophan + glyoxylate = indole-3-pyruvate + glycine. It catalyses the reaction L-leucine + glyoxylate = 4-methyl-2-oxopentanoate + glycine. It carries out the reaction 2-oxobutanoate + L-kynurenine = (2S)-2-aminobutanoate + kynurenate + H2O. The catalysed reaction is 2-oxoadipate + L-kynurenine = L-2-aminoadipate + kynurenate + H2O. It participates in amino-acid degradation; L-lysine degradation via saccharopine pathway; glutaryl-CoA from L-lysine: step 4/6. Its function is as follows. Transaminase with broad substrate specificity. Has transaminase activity towards aminoadipate, kynurenine, methionine and glutamate. Shows activity also towards tryptophan, aspartate and hydroxykynurenine. Accepts a variety of oxo-acids as amino-group acceptors, with a preference for 2-oxoglutarate, 2-oxocaproic acid, phenylpyruvate and alpha-oxo-gamma-methiol butyric acid. Can also use glyoxylate as amino-group acceptor (in vitro). The polypeptide is Kynurenine/alpha-aminoadipate aminotransferase, mitochondrial (Mus musculus (Mouse)).